A 352-amino-acid chain; its full sequence is DNA primase (352 aa).

Disordered stretches follow at residues 145-172 and 318-352; these read DPKL…REDG and YRQQ…GMSL. The segment covering 318–332 has biased composition (basic and acidic residues); sequence YRQQWEKLEGREPVR.

Functions as a primase with respect to replication at the (vegetative) origin of replication of pTF-FC2. In Acidithiobacillus ferrooxidans (Thiobacillus ferrooxidans), this protein is DNA primase (repB).